The following is a 261-amino-acid chain: Tryptophan synthase alpha chain (261 aa).

Active-site proton acceptor residues include Glu-47 and Asp-58.

Belongs to the TrpA family. In terms of assembly, tetramer of two alpha and two beta chains.

The catalysed reaction is (1S,2R)-1-C-(indol-3-yl)glycerol 3-phosphate + L-serine = D-glyceraldehyde 3-phosphate + L-tryptophan + H2O. It participates in amino-acid biosynthesis; L-tryptophan biosynthesis; L-tryptophan from chorismate: step 5/5. Functionally, the alpha subunit is responsible for the aldol cleavage of indoleglycerol phosphate to indole and glyceraldehyde 3-phosphate. This Neisseria meningitidis serogroup A / serotype 4A (strain DSM 15465 / Z2491) protein is Tryptophan synthase alpha chain.